Reading from the N-terminus, the 331-residue chain is Adenosine deaminase (331 aa).

Positions 12 and 14 each coordinate Zn(2+). Substrate-binding residues include His-14, Asp-16, and Gly-170. His-197 is a Zn(2+) binding site. Residue Glu-200 is the Proton donor of the active site. Asp-278 lines the Zn(2+) pocket. Position 279 (Asp-279) interacts with substrate.

It belongs to the metallo-dependent hydrolases superfamily. Adenosine and AMP deaminases family. Adenosine deaminase subfamily. Zn(2+) serves as cofactor.

The catalysed reaction is adenosine + H2O + H(+) = inosine + NH4(+). The enzyme catalyses 2'-deoxyadenosine + H2O + H(+) = 2'-deoxyinosine + NH4(+). Functionally, catalyzes the hydrolytic deamination of adenosine and 2-deoxyadenosine. This is Adenosine deaminase from Shewanella sp. (strain ANA-3).